Consider the following 125-residue polypeptide: Oxytocin-neurophysin 1 (125 aa).

A signal peptide spans 1–19 (MAGSSLACCLLGLLALTSA). Residues C20 and C25 are joined by a disulfide bond. G28 carries the post-translational modification Glycine amide. Intrachain disulfides connect C41–C85, C44–C58, C52–C75, C59–C65, C92–C104, C98–C116, and C105–C110.

This sequence belongs to the vasopressin/oxytocin family. Interacts with oxytocin receptor (Ki=1.5 nM). Interacts with vasopressin V1aR/AVPR1A (Ki=37 nM), V1bR/AVPR1B (Ki=222 nM), and V2R/AVPR2 receptors (Ki=823 nM).

Functionally, neurophysin 1 specifically binds oxytocin. In terms of biological role, oxytocin causes contraction of the smooth muscle of the uterus and of the mammary gland. Acts by binding to oxytocin receptor (OXTR). In Ovis aries (Sheep), this protein is Oxytocin-neurophysin 1 (OXT).